Reading from the N-terminus, the 445-residue chain is MSNTILQQLPKGQKVGIAFSGGLDTSAALLWMRQKGAVPYAYTANLGQPDEEDYNAIPRKAMEYGAENARLIDCRAQLAHEGIAAIQSGAFHISTGGVTYFNTTPLGRAVTGTMLVSAMREDDVNIWGDGSTFKGNDIERFYRYGLLTNPNLKIYKPWLDNQFIEELGGRHEMSEFLIANGFEYKMSVEKAYSTDSNMLGATHEAKDLEFLNTGIRIVKPIMGVAFWRDDVEVKAEEVTVRFEEGIPVALNGKTFSDHVELFLEANRIGGRHGLGMSDQIENRIIEAKSRGIYEAPGMALLHIAYERLVSGIHNEDTIEQYRINGLRLGRLLYQGRWFDPQALMLRETAQRWVARAITGEVTFELRRGNDYSILNTESPNLTYMPERLSMEKVENAPFDPVDRIGQLTMRNLDIVDTRDKLGIYTQTGLLSISKDSFLPQLNKKG.

Residues 18 to 26 and alanine 44 each bind ATP; that span reads AFSGGLDTS. Tyrosine 100 lines the L-citrulline pocket. ATP-binding residues include glycine 130 and threonine 132. Positions 132, 136, and 137 each coordinate L-aspartate. Asparagine 136 serves as a coordination point for L-citrulline. Aspartate 137 contacts ATP. L-citrulline contacts are provided by arginine 140 and serine 193. Aspartate 195 provides a ligand contact to ATP. L-citrulline contacts are provided by threonine 202, glutamate 204, and glutamate 281.

The protein belongs to the argininosuccinate synthase family. Type 2 subfamily. In terms of assembly, homotetramer.

The protein localises to the cytoplasm. The enzyme catalyses L-citrulline + L-aspartate + ATP = 2-(N(omega)-L-arginino)succinate + AMP + diphosphate + H(+). The protein operates within amino-acid biosynthesis; L-arginine biosynthesis; L-arginine from L-ornithine and carbamoyl phosphate: step 2/3. In Pasteurella multocida (strain Pm70), this protein is Argininosuccinate synthase (argG).